Reading from the N-terminus, the 321-residue chain is GTP cyclohydrolase FolE2 (321 aa).

The protein belongs to the GTP cyclohydrolase IV family.

The enzyme catalyses GTP + H2O = 7,8-dihydroneopterin 3'-triphosphate + formate + H(+). The protein operates within cofactor biosynthesis; 7,8-dihydroneopterin triphosphate biosynthesis; 7,8-dihydroneopterin triphosphate from GTP: step 1/1. Its function is as follows. Converts GTP to 7,8-dihydroneopterin triphosphate. In Paracoccus denitrificans (strain Pd 1222), this protein is GTP cyclohydrolase FolE2.